Reading from the N-terminus, the 448-residue chain is MAQPFVLLPTEDSHQTLRIQPPSTGIGLRGRIRVPGDKSISHRALMLGAIASGETTIEGLLLGEDPLSTAACFRAMGAEISELNSELVRVKGIGLQNLQEPLDVLNAGNSGTTIRLMMGLLAGQRDRFFCVTGDESLRSRPMARVIQPLSQMGAEIRGRQGNTRAPLAISGRSLQPIRYVSPIASAQVKSSILLAGLTCEGQTTVVEPALSRDHSERMFRAFGAKLTVNPEEISVTVEGPAELTGQPVVVPGDISSAAFWLVAAAIVPDSDLLIENVGVNPTRTGILEALQQMEAQITLENERIVAGEPVADLRVRSSNLQAIEIGGSLIPRLIDEVPILAVAAAFAKGTTIIRDAEELRVKESDRIAVMASELGRMGATISERPDGLEITGGAALTGATVDSYTDHRIAMSLAIAALQAKGQTQIQQAEAAAVSYPDFVPTLQQLLG.

3 residues coordinate 3-phosphoshikimate: Lys-38, Ser-39, and Arg-43. Lys-38 is a phosphoenolpyruvate binding site. 2 residues coordinate phosphoenolpyruvate: Gly-111 and Arg-140. 4 residues coordinate 3-phosphoshikimate: Ser-185, Gln-187, Asp-335, and Lys-362. Residue Gln-187 coordinates phosphoenolpyruvate. Asp-335 acts as the Proton acceptor in catalysis. Residues Arg-366 and Arg-408 each contribute to the phosphoenolpyruvate site.

This sequence belongs to the EPSP synthase family. Monomer.

It is found in the cytoplasm. It catalyses the reaction 3-phosphoshikimate + phosphoenolpyruvate = 5-O-(1-carboxyvinyl)-3-phosphoshikimate + phosphate. Its pathway is metabolic intermediate biosynthesis; chorismate biosynthesis; chorismate from D-erythrose 4-phosphate and phosphoenolpyruvate: step 6/7. Functionally, catalyzes the transfer of the enolpyruvyl moiety of phosphoenolpyruvate (PEP) to the 5-hydroxyl of shikimate-3-phosphate (S3P) to produce enolpyruvyl shikimate-3-phosphate and inorganic phosphate. The chain is 3-phosphoshikimate 1-carboxyvinyltransferase from Synechococcus elongatus (strain ATCC 33912 / PCC 7942 / FACHB-805) (Anacystis nidulans R2).